Here is a 546-residue protein sequence, read N- to C-terminus: Chaperonin GroEL (546 aa).

ATP contacts are provided by residues 30–33, K51, 87–91, G415, 479–481, and D495; these read TLGP, DGTTT, and NAA.

Belongs to the chaperonin (HSP60) family. As to quaternary structure, forms a cylinder of 14 subunits composed of two heptameric rings stacked back-to-back. Interacts with the co-chaperonin GroES.

The protein resides in the cytoplasm. It carries out the reaction ATP + H2O + a folded polypeptide = ADP + phosphate + an unfolded polypeptide.. Functionally, together with its co-chaperonin GroES, plays an essential role in assisting protein folding. The GroEL-GroES system forms a nano-cage that allows encapsulation of the non-native substrate proteins and provides a physical environment optimized to promote and accelerate protein folding. The sequence is that of Chaperonin GroEL from Xanthomonas campestris pv. phaseoli.